Here is a 466-residue protein sequence, read N- to C-terminus: Lipase 2 (466 aa).

The first 16 residues, 1–16, serve as a signal peptide directing secretion; it reads MKGLVFLLGLLPTIYA. Cysteine 112 and cysteine 285 are oxidised to a cystine. Serine 196 functions as the Charge relay system in the catalytic mechanism. Residues asparagine 231, asparagine 319, and asparagine 331 are each glycosylated (N-linked (GlcNAc...) asparagine). Residues aspartate 348 and histidine 381 each act as charge relay system in the active site. Cysteine 364 and cysteine 409 form a disulfide bridge. N-linked (GlcNAc...) asparagine glycosylation is found at asparagine 422 and asparagine 451.

Belongs to the AB hydrolase superfamily. Lipase family. Class Lip subfamily.

Its subcellular location is the secreted. It catalyses the reaction a triacylglycerol + H2O = a diacylglycerol + a fatty acid + H(+). Functionally, secreted lipase that is able to hydrolyze both the neutral triacylglycerols and the monopalmitate ester Tween 40, allowing the use of hydrolyzed products as carbon sources. Has broad lipolytic activity, which may be important for colonization and subsequent infection, therefore contributing to the persistence and virulence in human tissue. My be important for alimentary tract colonization, but not oral infection. Facilitates invasive disease via lipid-based suppression of the IL-17 response. Inhibits IL-17 production indirectly by suppressing IL-23 production by tissue-resident dendritic cells. This chain is Lipase 2, found in Candida albicans (strain SC5314 / ATCC MYA-2876) (Yeast).